A 643-amino-acid polypeptide reads, in one-letter code: Nucleolar GTP-binding protein 1 (643 aa).

One can recognise an OBG-type G domain in the interval 168 to 340; sequence RTLLICGYPN…VRNKACEKLL (173 aa). GTP is bound by residues 174-181, 220-224, and 288-291; these read GYPNVGKS, DTPGI, and NKTD. Residues 568–643 are disordered; the sequence is GDQEDSAPAG…KRGVGKTDFR (76 aa). Residues 594–622 show a composition bias toward basic and acidic residues; sequence MRSKAERMAKLERRERNRMARAGESDRHA.

The protein belongs to the TRAFAC class OBG-HflX-like GTPase superfamily. OBG GTPase family. NOG subfamily.

Its subcellular location is the nucleus. It is found in the nucleolus. In terms of biological role, involved in the biogenesis of the 60S ribosomal subunit. In Kluyveromyces lactis (strain ATCC 8585 / CBS 2359 / DSM 70799 / NBRC 1267 / NRRL Y-1140 / WM37) (Yeast), this protein is Nucleolar GTP-binding protein 1 (NOG1).